The chain runs to 124 residues: Small ribosomal subunit protein uS12 (124 aa).

Residues Met-1 to Pro-42 form a disordered region. Positions Arg-9–Lys-18 are enriched in basic residues. Positions Asn-27–Pro-42 are enriched in polar residues. Asp-89 carries the 3-methylthioaspartic acid modification.

It belongs to the universal ribosomal protein uS12 family. In terms of assembly, part of the 30S ribosomal subunit. Contacts proteins S8 and S17. May interact with IF1 in the 30S initiation complex.

Its function is as follows. With S4 and S5 plays an important role in translational accuracy. Interacts with and stabilizes bases of the 16S rRNA that are involved in tRNA selection in the A site and with the mRNA backbone. Located at the interface of the 30S and 50S subunits, it traverses the body of the 30S subunit contacting proteins on the other side and probably holding the rRNA structure together. The combined cluster of proteins S8, S12 and S17 appears to hold together the shoulder and platform of the 30S subunit. The sequence is that of Small ribosomal subunit protein uS12 from Tropheryma whipplei (strain TW08/27) (Whipple's bacillus).